The chain runs to 427 residues: 3-phosphoshikimate 1-carboxyvinyltransferase (427 aa).

3-phosphoshikimate contacts are provided by Lys27, Ser28, and Arg32. Residue Lys27 participates in phosphoenolpyruvate binding. Phosphoenolpyruvate-binding residues include Gly95 and Arg123. 3-phosphoshikimate contacts are provided by Ser166, Ser167, Gln168, Ser192, Asp305, and Lys332. Residue Gln168 participates in phosphoenolpyruvate binding. Asp305 acts as the Proton acceptor in catalysis. Phosphoenolpyruvate contacts are provided by Arg336 and Arg377.

This sequence belongs to the EPSP synthase family. As to quaternary structure, monomer.

It localises to the cytoplasm. It carries out the reaction 3-phosphoshikimate + phosphoenolpyruvate = 5-O-(1-carboxyvinyl)-3-phosphoshikimate + phosphate. Its pathway is metabolic intermediate biosynthesis; chorismate biosynthesis. Functionally, catalyzes the transfer of the enolpyruvyl moiety of phosphoenolpyruvate (PEP) to the 5-hydroxyl of shikimate-3-phosphate (S3P) to produce enolpyruvyl shikimate-3-phosphate and inorganic phosphate. The polypeptide is 3-phosphoshikimate 1-carboxyvinyltransferase (Aeropyrum pernix (strain ATCC 700893 / DSM 11879 / JCM 9820 / NBRC 100138 / K1)).